The chain runs to 382 residues: Ribosomal RNA large subunit methyltransferase G (382 aa).

This sequence belongs to the methyltransferase superfamily. RlmG family.

Its subcellular location is the cytoplasm. The catalysed reaction is guanosine(1835) in 23S rRNA + S-adenosyl-L-methionine = N(2)-methylguanosine(1835) in 23S rRNA + S-adenosyl-L-homocysteine + H(+). In terms of biological role, specifically methylates the guanine in position 1835 (m2G1835) of 23S rRNA. This chain is Ribosomal RNA large subunit methyltransferase G, found in Aliivibrio fischeri (strain ATCC 700601 / ES114) (Vibrio fischeri).